Consider the following 56-residue polypeptide: MEKLWRRGIEEYGVTYANLKLNVIINCYEGERSHRDTGNHNIHCSSAKPYSLLCFT.

This is an uncharacterized protein from Thermoproteus tenax virus 1 (strain KRA1) (TTV1).